The primary structure comprises 185 residues: Threonylcarbamoyl-AMP synthase (185 aa).

The 182-residue stretch at 4–185 (SFRVQQAARE…LATGEVVRPG (182 aa)) folds into the YrdC-like domain.

It belongs to the SUA5 family. TsaC subfamily.

Its subcellular location is the cytoplasm. The enzyme catalyses L-threonine + hydrogencarbonate + ATP = L-threonylcarbamoyladenylate + diphosphate + H2O. Required for the formation of a threonylcarbamoyl group on adenosine at position 37 (t(6)A37) in tRNAs that read codons beginning with adenine. Catalyzes the conversion of L-threonine, HCO(3)(-)/CO(2) and ATP to give threonylcarbamoyl-AMP (TC-AMP) as the acyladenylate intermediate, with the release of diphosphate. In Pseudomonas putida (strain GB-1), this protein is Threonylcarbamoyl-AMP synthase.